Consider the following 246-residue polypeptide: E3 ubiquitin-protein ligase MARCHF2 (246 aa).

The segment at 56–116 (DTPSDCPFCR…ELCHTEFAVE (61 aa)) adopts an RING-CH-type zinc-finger fold. Cysteine 64, cysteine 67, cysteine 80, cysteine 82, histidine 90, cysteine 93, cysteine 106, and cysteine 109 together coordinate Zn(2+). A required for interaction with IKBKG region spans residues 121–246 (PLTEWLKDPG…LKKVAEETPV (126 aa)). Helical transmembrane passes span 138–158 (LCCDMVCFVFITPLAAISGWL) and 175–195 (AVGLIALTIALFTIYVLWTLV).

Interacts with STX6; the interaction promotes MARCHF2-mediated ubiquitination and degradation of CFTR. Interacts with MARCHF3. Interacts with GOPC/CAL; the interaction leads to CFTR ubiquitination and degradation. Interacts with CFTR; the interaction leads to CFTR ubiqtuitination and degradation. Interacts (via PDZ domain) with DLG1 (via PDZ domains); the interaction leads to DLG1 ubiqtuitination and degradation. Interacts with ERGIC3. Interacts with ADRB2. Interacts with IKBKG/NEMO; during the late stages of macrophage viral and bacterial infection; the interaction leads to ubiquitination and degradation of IKBKG/NEMO. As to expression, ubiquitously expressed. Present in liver (at protein level).

It localises to the endoplasmic reticulum membrane. Its subcellular location is the lysosome membrane. The protein localises to the endosome membrane. The protein resides in the golgi apparatus membrane. It is found in the cytoplasm. It localises to the cell membrane. The enzyme catalyses S-ubiquitinyl-[E2 ubiquitin-conjugating enzyme]-L-cysteine + [acceptor protein]-L-lysine = [E2 ubiquitin-conjugating enzyme]-L-cysteine + N(6)-ubiquitinyl-[acceptor protein]-L-lysine.. Its pathway is protein modification; protein ubiquitination. In terms of biological role, E3 ubiquitin-protein ligase that may mediate ubiquitination of TFRC and CD86, and promote their subsequent endocytosis and sorting to lysosomes via multivesicular bodies. E3 ubiquitin ligases accept ubiquitin from an E2 ubiquitin-conjugating enzyme in the form of a thioester and then directly transfer the ubiquitin to targeted substrates. Together with GOPC/CAL mediates the ubiquitination and lysosomal degradation of CFTR. Ubiquitinates and therefore mediates the degradation of DLG1. Regulates the intracellular trafficking and secretion of alpha1-antitrypsin/SERPINA1 and HP/haptoglobin via ubiquitination and degradation of the cargo receptor ERGIC3. Negatively regulates the antiviral and antibacterial immune response by repression of the NF-kB and type 1 IFN signaling pathways, via MARCHF2-mediated K48-linked polyubiquitination of IKBKG/NEMO, resulting in its proteasomal degradation. May be involved in endosomal trafficking through interaction with STX6. This Rattus norvegicus (Rat) protein is E3 ubiquitin-protein ligase MARCHF2 (Marchf2).